An 891-amino-acid polypeptide reads, in one-letter code: Probable serine/threonine-protein kinase mkcC (891 aa).

Disordered stretches follow at residues 24-70, 85-121, 264-435, 495-526, and 565-588; these read IELN…TATI, ANNN…APSS, DDPQ…AREK, NSLG…PEVS, and TTAS…DDYD. The span at 29 to 41 shows a compositional bias: low complexity; sequence QEEQQQPEQQEQP. The span at 45-58 shows a compositional bias: basic and acidic residues; sequence EELKDNNEKIKTSE. 5 stretches are compositionally biased toward low complexity: residues 61–70, 86–105, 297–314, 322–360, and 379–397; these read TTTTTTTATI, NNNT…LNNN, STSN…TTGK, SNSS…SGTS, and TTGN…TTSS. Residues 422-432 are compositionally biased toward basic residues; the sequence is RKRKEQKRSRA. Residues 495-522 are compositionally biased toward low complexity; that stretch reads NSLGSSINKNNSNNTTTTTTTTNTNNKS. The 249-residue stretch at 616-864 folds into the Protein kinase domain; that stretch reads YKNLKQIGSG…AEQLLKHPWI (249 aa). Residues 622 to 630 and lysine 645 contribute to the ATP site; that span reads IGSGGFGSV. Catalysis depends on aspartate 735, which acts as the Proton acceptor.

This sequence belongs to the protein kinase superfamily. STE Ser/Thr protein kinase family. STE20 subfamily. The cofactor is Mg(2+).

It carries out the reaction L-seryl-[protein] + ATP = O-phospho-L-seryl-[protein] + ADP + H(+). It catalyses the reaction L-threonyl-[protein] + ATP = O-phospho-L-threonyl-[protein] + ADP + H(+). The polypeptide is Probable serine/threonine-protein kinase mkcC (Dictyostelium discoideum (Social amoeba)).